The sequence spans 192 residues: Ras-like protein RAS2 (192 aa).

15–22 contacts GTP; that stretch reads GGGGVGKS. The Effector region motif lies at 37–45; the sequence is YDPTIEDSY. GTP-binding positions include 62-66 and 121-124; these read DTAGQ and NKSD. Cys189 is subject to Cysteine methyl ester. A lipid anchor (S-geranylgeranyl cysteine) is attached at Cys189. A propeptide spans 190–192 (removed in mature form); the sequence is IVL.

Belongs to the small GTPase superfamily. Ras family.

The protein resides in the cell membrane. It catalyses the reaction GTP + H2O = GDP + phosphate + H(+). Alternates between an inactive form bound to GDP and an active form bound to GTP. Activated by a guanine nucleotide-exchange factor (GEF) and inactivated by a GTPase-activating protein (GAP). Its function is as follows. Ras proteins bind GDP/GTP and possess intrinsic GTPase activity. This chain is Ras-like protein RAS2 (RAS2), found in Hydra vulgaris (Hydra).